Here is a 124-residue protein sequence, read N- to C-terminus: Ribonuclease pancreatic (124 aa).

A compositionally biased stretch (basic and acidic residues) spans 1–13; the sequence is KESAAAKFERQHM. Residues 1 to 24 form a disordered region; the sequence is KESAAAKFERQHMDSSTSSASSSN. Positions 7 and 10 each coordinate substrate. Histidine 12 (proton acceptor) is an active-site residue. 4 cysteine pairs are disulfide-bonded: cysteine 26/cysteine 84, cysteine 40/cysteine 95, cysteine 58/cysteine 110, and cysteine 65/cysteine 72. Asparagine 34 carries N-linked (GlcNAc...) asparagine; partial glycosylation. Residues 41–45, lysine 66, and arginine 85 contribute to the substrate site; that span reads KPVNT. Catalysis depends on histidine 119, which acts as the Proton donor.

Belongs to the pancreatic ribonuclease family. In terms of assembly, monomer. Interacts with and forms tight 1:1 complexes with RNH1. Dimerization of two such complexes may occur. Interaction with RNH1 inhibits this protein. In terms of tissue distribution, pancreas.

Its subcellular location is the secreted. It carries out the reaction an [RNA] containing cytidine + H2O = an [RNA]-3'-cytidine-3'-phosphate + a 5'-hydroxy-ribonucleotide-3'-[RNA].. The catalysed reaction is an [RNA] containing uridine + H2O = an [RNA]-3'-uridine-3'-phosphate + a 5'-hydroxy-ribonucleotide-3'-[RNA].. Endonuclease that catalyzes the cleavage of RNA on the 3' side of pyrimidine nucleotides. Acts on single-stranded and double-stranded RNA. This chain is Ribonuclease pancreatic (RNASE1), found in Ovis aries (Sheep).